The primary structure comprises 525 residues: uncharacterized protein (525 aa).

The N-terminal stretch at 1-21 (MLECLSALLVLFAGGGGSVLA) is a signal peptide. Residues 22–448 (AVQSKTVADP…ISAASQLDER (427 aa)) are Extracellular-facing. Positions 242 to 264 (KVSSENCSKDTDDKSGSKKERNT) are disordered. A helical membrane pass occupies residues 449 to 469 (IFIFTAITVSITTLMMLGFSY). Topologically, residues 470-525 (RSRVSFRDHSIDDSDDDNDWSDDEVEFDEEYFYSLPVSIPEKGISLDKMAQQLGVE) are cytoplasmic.

The protein localises to the membrane. This is an uncharacterized protein from Saccharomyces cerevisiae (strain RM11-1a) (Baker's yeast).